The primary structure comprises 1253 residues: Myosin-1 (1253 aa).

The interval 1-40 (MGHSRRPVGGEKKSRGFGRSKAAADVGDGRQAGKPQVKKA) is disordered. The Myosin motor domain maps to 50 to 729 (IGVSDLTLLS…TLFALEAMRD (680 aa)). Residue 143–150 (GESGAGKT) participates in ATP binding. S371 bears the Phosphoserine mark. An actin-binding region spans residues 418 to 500 (SIGILDIYGF…PGVFAALNDA (83 aa)). 2 IQ domains span residues 733–753 (HNMA…RIEC) and 754–779 (ATRI…QGHQ). Positions 787 to 977 (RRRMSLLGSR…TIHTGAGEPA (191 aa)) constitute a TH1 domain. 2 disordered regions span residues 959–1083 (TGDD…PKKP) and 1139–1253 (QVAP…DDDW). The span at 1029–1055 (PQPAAAQPAAPQPAARVVPQPVAAVAA) shows a compositional bias: low complexity. Pro residues-rich tracts occupy residues 1068 to 1081 (APPP…PAPK) and 1143 to 1155 (APKP…PPAA). The SH3 domain maps to 1080 to 1141 (PKKPTAKALY…PEAYLEEQVA (62 aa)). 2 stretches are compositionally biased toward low complexity: residues 1156–1173 (PRST…AKAK) and 1221–1235 (NSAS…LAEA).

Belongs to the TRAFAC class myosin-kinesin ATPase superfamily. Myosin family. In terms of processing, phosphorylation of the TEDS site (Ser-371) is required for the polarization of the actin cytoskeleton. Phosphorylation probably activates the myosin-I ATPase activity.

Its subcellular location is the cytoplasm. It is found in the cytoskeleton. The protein localises to the actin patch. Type-I myosin implicated in the organization of the actin cytoskeleton. Required for proper actin cytoskeleton polarization. At the cell cortex, assembles in patch-like structures together with proteins from the actin-polymerizing machinery and promotes actin assembly. Functions as actin nucleation-promoting factor (NPF) for the Arp2/3 complex. Plays an important role in polarized growth, spore germination, hyphal morphogenesis, and septal wall formation. This is Myosin-1 (myoA) from Aspergillus clavatus (strain ATCC 1007 / CBS 513.65 / DSM 816 / NCTC 3887 / NRRL 1 / QM 1276 / 107).